We begin with the raw amino-acid sequence, 708 residues long: Leukotoxin translocation ATP-binding protein LktB (708 aa).

Residues 1-126 (MEANHQRNDL…ACYQGQLILV (126 aa)) form the Peptidase C39 domain. Positions 155-437 (FLETLIVSIF…LAQLWQDFQQ (283 aa)) constitute an ABC transmembrane type-1 domain. Transmembrane regions (helical) follow at residues 159-179 (LIVSIFLQIFALITPLFFQVV), 192-212 (LNIITVALAIVIIFEIVLSGL), 270-290 (ALTSVLDLLFSFIFFAVMWYY), 296-316 (LVILGSLPCYILWSIFISPIL), and 389-409 (VMVINLWLGAHLVISGDLSIG). Positions 469–704 (ISFKNIRFRY…SNGLYSYLHQ (236 aa)) constitute an ABC transporter domain. 503 to 510 (GRSGSGKS) is a binding site for ATP.

This sequence belongs to the ABC transporter superfamily. Protein-1 exporter (TC 3.A.1.109) family. As to quaternary structure, homodimer.

Its subcellular location is the cell inner membrane. The enzyme catalyses ATP + H2O + proteinSide 1 = ADP + phosphate + proteinSide 2.. In terms of biological role, part of the ABC transporter complex LktBD involved in leukotoxin export. Transmembrane domains (TMD) form a pore in the inner membrane and the ATP-binding domain (NBD) is responsible for energy generation. The chain is Leukotoxin translocation ATP-binding protein LktB (lktB) from Mannheimia haemolytica (Pasteurella haemolytica).